Consider the following 296-residue polypeptide: NAD kinase (296 aa).

The active-site Proton acceptor is the Asp73. Residues 73 to 74, Lys78, 151 to 152, Arg178, Asp180, and 191 to 196 each bind NAD(+); these read DG, NE, and TAHAMS.

The protein belongs to the NAD kinase family. It depends on a divalent metal cation as a cofactor.

It localises to the cytoplasm. It catalyses the reaction NAD(+) + ATP = ADP + NADP(+) + H(+). Involved in the regulation of the intracellular balance of NAD and NADP, and is a key enzyme in the biosynthesis of NADP. Catalyzes specifically the phosphorylation on 2'-hydroxyl of the adenosine moiety of NAD to yield NADP. This is NAD kinase from Francisella tularensis subsp. tularensis (strain WY96-3418).